A 496-amino-acid chain; its full sequence is Probable cytosol aminopeptidase (496 aa).

Residues lysine 251 and aspartate 256 each coordinate Mn(2+). The active site involves lysine 263. Mn(2+)-binding residues include aspartate 274, aspartate 333, and glutamate 335. Arginine 337 is a catalytic residue.

It belongs to the peptidase M17 family. It depends on Mn(2+) as a cofactor.

It is found in the cytoplasm. It catalyses the reaction Release of an N-terminal amino acid, Xaa-|-Yaa-, in which Xaa is preferably Leu, but may be other amino acids including Pro although not Arg or Lys, and Yaa may be Pro. Amino acid amides and methyl esters are also readily hydrolyzed, but rates on arylamides are exceedingly low.. It carries out the reaction Release of an N-terminal amino acid, preferentially leucine, but not glutamic or aspartic acids.. Functionally, presumably involved in the processing and regular turnover of intracellular proteins. Catalyzes the removal of unsubstituted N-terminal amino acids from various peptides. The polypeptide is Probable cytosol aminopeptidase (Acidovorax sp. (strain JS42)).